The sequence spans 517 residues: Acetylcholine receptor subunit delta (517 aa).

The signal sequence occupies residues 1–21; that stretch reads MEGPVLTLGLLAALAVCGSWG. At 22 to 245 the chain is on the extracellular side; the sequence is LNEEERLIRH…ITFYLIIRRK (224 aa). Asn-97 and Asn-164 each carry an N-linked (GlcNAc...) asparagine glycan. Cys-151 and Cys-165 form a disulfide bridge. The next 3 membrane-spanning stretches (helical) occupy residues 246–270, 278–299, and 312–333; these read PLFY…VFYL, TSVA…SKRL, and FLLF…VLNI. Residues 334–471 lie on the Cytoplasmic side of the membrane; the sequence is HFRTPSTHVL…WNRVARTVDR (138 aa). The residue at position 390 (Tyr-390) is a Phosphotyrosine; by Tyr-kinases. The chain crosses the membrane as a helical span at residues 472-490; the sequence is LCLFVVTPVMVVGTAWIFL.

It belongs to the ligand-gated ion channel (TC 1.A.9) family. Acetylcholine receptor (TC 1.A.9.1) subfamily. Delta/CHRND sub-subfamily. In terms of assembly, pentamer of two alpha chains, and one each of the beta, delta, and gamma (in immature muscle) or epsilon (in mature muscle) chains. The muscle heteropentamer composed of alpha-1, beta-1, delta, epsilon subunits interacts with the alpha-conotoxin ImII.

Its subcellular location is the postsynaptic cell membrane. The protein resides in the cell membrane. It catalyses the reaction K(+)(in) = K(+)(out). It carries out the reaction Na(+)(in) = Na(+)(out). Its function is as follows. After binding acetylcholine, the AChR responds by an extensive change in conformation that affects all subunits and leads to opening of an ion-conducting channel across the plasma membrane. This is Acetylcholine receptor subunit delta from Homo sapiens (Human).